The chain runs to 488 residues: TOX high mobility group box family member 2 (488 aa).

Residues 76–114 (YEIPPITPPNLPEPSLLHLGDHEASYHSLCHGLTPNGLL) form a required for transcriptional activation region. 3 disordered regions span residues 192–258 (RSSI…PQKP), 293–328 (WDSL…KQPM), and 363–473 (SLLP…ECGI). A compositionally biased stretch (low complexity) spans 204–216 (GSKSATPSPSSST). Residues 222-239 (EVHFKISGEKRPSADPGK) show a composition bias toward basic and acidic residues. The short motif at 223 to 252 (VHFKISGEKRPSADPGKKAKNPKKKKKKDP) is the Nuclear localization signal element. Basic residues predominate over residues 240–250 (KAKNPKKKKKK). A DNA-binding region (HMG box) is located at residues 255–323 (PQKPVSAYAL…QANPPAKMLP (69 aa)). Residues 302-316 (QSSPDQGETKSTQAN) are compositionally biased toward polar residues. The segment covering 443-460 (PSSSGSCSPGPSNPTSSG) has biased composition (low complexity).

Its subcellular location is the nucleus. In terms of biological role, putative transcriptional activator involved in the hypothalamo-pituitary-gonadal system. The polypeptide is TOX high mobility group box family member 2 (TOX2) (Homo sapiens (Human)).